Reading from the N-terminus, the 474-residue chain is PRAME family member 14 (474 aa).

LRR repeat units follow at residues Gln15 to Pro38, Leu204 to Lys229, Leu271 to Pro294, Leu319 to Ala342, and Met391 to Ala414.

The protein belongs to the PRAME family.

This chain is PRAME family member 14, found in Homo sapiens (Human).